Here is a 388-residue protein sequence, read N- to C-terminus: tRNA-specific 2-thiouridylase MnmA (388 aa).

ATP contacts are provided by residues 26 to 33 (GLSGGVDS) and Leu-52. Residue Cys-113 is the Nucleophile of the active site. A disulfide bridge links Cys-113 with Cys-223. Gly-138 provides a ligand contact to ATP. The interval 173-175 (KDQ) is interaction with tRNA. The Cysteine persulfide intermediate role is filled by Cys-223. The interval 328–329 (RY) is interaction with tRNA.

This sequence belongs to the MnmA/TRMU family.

It is found in the cytoplasm. It carries out the reaction S-sulfanyl-L-cysteinyl-[protein] + uridine(34) in tRNA + AH2 + ATP = 2-thiouridine(34) in tRNA + L-cysteinyl-[protein] + A + AMP + diphosphate + H(+). Functionally, catalyzes the 2-thiolation of uridine at the wobble position (U34) of tRNA, leading to the formation of s(2)U34. The protein is tRNA-specific 2-thiouridylase MnmA of Prochlorococcus marinus (strain NATL2A).